An 874-amino-acid polypeptide reads, in one-letter code: Oxysterol-binding protein-related protein 5 (874 aa).

The segment at 1–71 (MKEEAFLRRR…PQTPGSATKV (71 aa)) is disordered. Ser-12 carries the phosphoserine modification. Positions 93–123 (VSKKDALKAQKENYRQEKKRATKQLFSALTD) form a coiled coil. Residues 126 to 243 (VVIMADSLKI…WLDALELALR (118 aa)) enclose the PH domain. 2 disordered regions span residues 255-277 (QGRD…GLPT) and 299-338 (FSDK…GPWR). Residues 261–277 (QGSSPDASPSSLYGLPT) show a composition bias toward polar residues. Residues 299–308 (FSDKSERENA) show a composition bias toward basic and acidic residues. Residues 383-388 (LSRVVL), 445-448 (KPYN), and 477-478 (HH) contribute to the a 1,2-diacyl-sn-glycero-3-phospho-(1D-myo-inositol 4-phosphate) site. A 1,2-diacyl-sn-glycero-3-phospho-L-serine contacts are provided by residues 383-388 (LSRVVL) and Asn-448. Ser-503 is a binding site for a 1,2-diacyl-sn-glycero-3-phospho-L-serine. Basic and acidic residues predominate over residues 660 to 684 (GDQHKATQEKSVLEEAQRQRAREHQ). Disordered regions lie at residues 660 to 685 (GDQH…EHQQ) and 739 to 798 (GQTT…GGES). 3 residues coordinate a 1,2-diacyl-sn-glycero-3-phospho-(1D-myo-inositol 4-phosphate): Lys-669, Glu-673, and Arg-677. Residues Ser-746 and Ser-749 each carry the phosphoserine modification. Residues 754–764 (PSSDRRLRKAS) show a composition bias toward basic and acidic residues. The segment covering 765–782 (DQPSGHSQVTESSGSTPE) has biased composition (polar residues). Residues 855 to 873 (SWFLLCIFLTCQLFINYIL) traverse the membrane as a helical segment.

This sequence belongs to the OSBP family.

Its subcellular location is the endoplasmic reticulum membrane. Functionally, lipid transporter involved in lipid countertransport between the endoplasmic reticulum and the plasma membrane: specifically exchanges phosphatidylserine with phosphatidylinositol 4-phosphate (PI4P), delivering phosphatidylserine to the plasma membrane in exchange for PI4P, which is degraded by the SAC1/SACM1L phosphatase in the endoplasmic reticulum. Binds phosphatidylserine and PI4P in a mutually exclusive manner. May cooperate with NPC1 to mediate the exit of cholesterol from endosomes/lysosomes. Binds 25-hydroxycholesterol and cholesterol. This chain is Oxysterol-binding protein-related protein 5 (Osbpl5), found in Mus musculus (Mouse).